Consider the following 244-residue polypeptide: 15,16-dihydrobiliverdin:ferredoxin oxidoreductase (244 aa).

This sequence belongs to the HY2 family.

The enzyme catalyses 15,16-dihydrobiliverdin + oxidized 2[4Fe-4S]-[ferredoxin] = biliverdin IXalpha + reduced 2[4Fe-4S]-[ferredoxin] + 2 H(+). Functionally, catalyzes the two-electron reduction of biliverdin IX-alpha at the C15 methine bridge. The protein is 15,16-dihydrobiliverdin:ferredoxin oxidoreductase (pebA) of Nostoc punctiforme (strain ATCC 29133 / PCC 73102).